The sequence spans 758 residues: 5-methyltetrahydropteroyltriglutamate--homocysteine methyltransferase (758 aa).

Residues 16–19 (RELK) and lysine 117 contribute to the 5-methyltetrahydropteroyltri-L-glutamate site. Residues 436 to 438 (IGS) and glutamate 489 contribute to the L-homocysteine site. L-methionine is bound by residues 436-438 (IGS) and glutamate 489. 5-methyltetrahydropteroyltri-L-glutamate is bound by residues 520–521 (RC) and tryptophan 566. Aspartate 604 lines the L-homocysteine pocket. Residue aspartate 604 coordinates L-methionine. Glutamate 610 is a binding site for 5-methyltetrahydropteroyltri-L-glutamate. Zn(2+) is bound by residues histidine 646, cysteine 648, and glutamate 670. Histidine 699 (proton donor) is an active-site residue. Zn(2+) is bound at residue cysteine 731.

Belongs to the vitamin-B12 independent methionine synthase family. Zn(2+) is required as a cofactor.

The catalysed reaction is 5-methyltetrahydropteroyltri-L-glutamate + L-homocysteine = tetrahydropteroyltri-L-glutamate + L-methionine. Its pathway is amino-acid biosynthesis; L-methionine biosynthesis via de novo pathway; L-methionine from L-homocysteine (MetE route): step 1/1. Its function is as follows. Catalyzes the transfer of a methyl group from 5-methyltetrahydrofolate to homocysteine resulting in methionine formation. This is 5-methyltetrahydropteroyltriglutamate--homocysteine methyltransferase from Ruthia magnifica subsp. Calyptogena magnifica.